The primary structure comprises 352 residues: Fructose-1,6-bisphosphatase class 1 (352 aa).

Residues Glu111, Asp133, Ile135, and Asp136 each coordinate Mg(2+). Substrate is bound by residues 136–139 (DGSS), Asn228, Tyr256, and Lys286. Glu292 provides a ligand contact to Mg(2+).

This sequence belongs to the FBPase class 1 family. In terms of assembly, homotetramer. Mg(2+) serves as cofactor.

Its subcellular location is the cytoplasm. It carries out the reaction beta-D-fructose 1,6-bisphosphate + H2O = beta-D-fructose 6-phosphate + phosphate. The protein operates within carbohydrate biosynthesis; Calvin cycle. The chain is Fructose-1,6-bisphosphatase class 1 from Crocosphaera subtropica (strain ATCC 51142 / BH68) (Cyanothece sp. (strain ATCC 51142)).